The sequence spans 462 residues: MDKLTFPIFPAADLVNFFRQNILTGTEAKNFNKNDIFPNPKPEMVQKLYMRILQQVFNYGVEQFYMVPMDLDIQYPHLVEGFAPVANILKLMARFLPMCRVYDFHPSDVLNPKGKRTLHSLSGIVNFLHFSATRKEVYFEYCSSYKSALENVRQLQKANQEAEIKIEKLTTVPPEQQAEFKALSSEIHDLQQIISQEYRAKDVAFQEKIAQRKTEFAEKNKRLNEQKLAIATMKEEQERMKSQIVESPEQRKSKTERMKETVHRLKQARQETNDKCDYYRDRVAFACMWQTDVQGYLKKLQGIDTNLEIHRKIREEIRHSEEQVVNLNLELKSLSNEDAQLKRIILVKKEKLAKVDIKNKKKQEDFNQQKQEILEVCSRIQEKRQVVHGRVAQVLQEIQQTIGKKEQLLETTEAGKKKCQEVITDFRAALEKYHDSLQKASERSADRRREKIAELNRRLSRR.

Coiled coils occupy residues serine 143–aspartate 277 and glutamate 308–arginine 461. A disordered region spans residues arginine 239 to lysine 259. A compositionally biased stretch (basic and acidic residues) spans proline 248–lysine 259.

It belongs to the NUF2 family. In terms of assembly, component of the NDC80 complex, which is composed of ndc80, cdca1, spbc24 and spbc25. The NDC80 complex interacts with mis12 and zwint.

The protein resides in the nucleus. Its subcellular location is the chromosome. It is found in the centromere. It localises to the kinetochore. Acts as a component of the essential kinetochore-associated NDC80 complex, which is required for chromosome segregation and spindle checkpoint activity. Required for kinetochore integrity and the organization of stable microtubule binding sites in the outer plate of the kinetochore. The NDC80 complex synergistically enhances the affinity of the SKA1 complex for microtubules and may allow the NDC80 complex to track depolymerizing microtubules. This chain is Kinetochore protein Nuf2-A (nuf2-a), found in Xenopus laevis (African clawed frog).